Here is a 604-residue protein sequence, read N- to C-terminus: Sulfite reductase [NADPH] flavoprotein alpha-component (604 aa).

The Flavodoxin-like domain occupies 66–204 (VTVLSASQTG…AADGWTDNIA (139 aa)). FMN-binding positions include 72-77 (SQTGNA), 119-122 (STQG), and 155-164 (LGDSSYPNFC). The FAD-binding FR-type domain maps to 239–453 (ADPFPAALLA…VERNDGFRLP (215 aa)). FAD contacts are provided by residues Thr-327, Gln-361, 391–394 (RLYS), 409–411 (TVG), and 424–427 (GGAS). NADP(+) is bound by residues 524-525 (SR), 530-534 (KIYVQ), and Asp-566. Tyr-604 contributes to the FAD binding site.

Belongs to the NADPH-dependent sulphite reductase flavoprotein subunit CysJ family. The protein in the N-terminal section; belongs to the flavodoxin family. This sequence in the C-terminal section; belongs to the flavoprotein pyridine nucleotide cytochrome reductase family. As to quaternary structure, alpha(8)-beta(8). The alpha component is a flavoprotein, the beta component is a hemoprotein. The cofactor is FAD. FMN serves as cofactor.

It carries out the reaction hydrogen sulfide + 3 NADP(+) + 3 H2O = sulfite + 3 NADPH + 4 H(+). It participates in sulfur metabolism; hydrogen sulfide biosynthesis; hydrogen sulfide from sulfite (NADPH route): step 1/1. Functionally, component of the sulfite reductase complex that catalyzes the 6-electron reduction of sulfite to sulfide. This is one of several activities required for the biosynthesis of L-cysteine from sulfate. The flavoprotein component catalyzes the electron flow from NADPH -&gt; FAD -&gt; FMN to the hemoprotein component. This Neisseria meningitidis serogroup A / serotype 4A (strain DSM 15465 / Z2491) protein is Sulfite reductase [NADPH] flavoprotein alpha-component.